A 371-amino-acid chain; its full sequence is tRNA-specific 2-thiouridylase MnmA (371 aa).

ATP-binding positions include alanine 24–serine 31 and leucine 50. Cysteine 120 functions as the Nucleophile in the catalytic mechanism. A disulfide bridge connects residues cysteine 120 and cysteine 216. ATP is bound at residue glycine 144. Residues lysine 166–glutamine 168 form an interaction with tRNA region. Catalysis depends on cysteine 216, which acts as the Cysteine persulfide intermediate.

This sequence belongs to the MnmA/TRMU family.

The protein resides in the cytoplasm. The enzyme catalyses S-sulfanyl-L-cysteinyl-[protein] + uridine(34) in tRNA + AH2 + ATP = 2-thiouridine(34) in tRNA + L-cysteinyl-[protein] + A + AMP + diphosphate + H(+). In terms of biological role, catalyzes the 2-thiolation of uridine at the wobble position (U34) of tRNA, leading to the formation of s(2)U34. This Wolbachia sp. subsp. Brugia malayi (strain TRS) protein is tRNA-specific 2-thiouridylase MnmA.